Consider the following 56-residue polypeptide: Large ribosomal subunit protein eL20 (56 aa).

The tract at residues 1–24 is disordered; the sequence is MSTYTVRGSFPARDGPQQFEKEVE.

Belongs to the eukaryotic ribosomal protein eL20 family. In terms of assembly, part of the 50S ribosomal subunit. Binds 23S rRNA.

In Haloarcula marismortui (strain ATCC 43049 / DSM 3752 / JCM 8966 / VKM B-1809) (Halobacterium marismortui), this protein is Large ribosomal subunit protein eL20.